A 60-amino-acid chain; its full sequence is Large ribosomal subunit protein uL30 (60 aa).

This sequence belongs to the universal ribosomal protein uL30 family. Part of the 50S ribosomal subunit.

This chain is Large ribosomal subunit protein uL30, found in Kineococcus radiotolerans (strain ATCC BAA-149 / DSM 14245 / SRS30216).